A 236-amino-acid chain; its full sequence is EEF1A lysine methyltransferase 2 (236 aa).

Positions 1 to 11 (MSSGADGGGGA) are enriched in gly residues. The disordered stretch occupies residues 1 to 31 (MSSGADGGGGAAVAARSDKGSPGEDGFVPSA). Serine 2 is modified (N-acetylserine). Residue serine 21 is modified to Phosphoserine.

Belongs to the class I-like SAM-binding methyltransferase superfamily. EFM4 family.

It localises to the cytoplasm. The protein localises to the nucleus. It carries out the reaction L-lysyl-[protein] + 3 S-adenosyl-L-methionine = N(6),N(6),N(6)-trimethyl-L-lysyl-[protein] + 3 S-adenosyl-L-homocysteine + 3 H(+). Protein-lysine methyltransferase that selectively catalyzes the trimethylation of EEF1A at 'Lys-318'. This is EEF1A lysine methyltransferase 2 from Homo sapiens (Human).